A 271-amino-acid chain; its full sequence is MAKTGESLRDKPRWSLVGMTALVTGGSKGIGEAVVEELATLGARIHTCARDETQLQESLRKWQAKGFQVTTSVCDVSSRDKREKLMETVSTIFEGKLNILVNNVGTCIVKPTLQHTAEDFSFTMATNLESAFHLSQLAHPLLKASGSGSIVLISSVSGVVHVNGASIYGVSKGAMNQLGRNLACEWASDNIRTNSVCPWFIETPLVTESLSNEEFRKEVESRPPMGRVGEVNEVSSLVAFLCLPAASYITGQTICVDGGFTVNGFSFKPLP.

22–46 (LVTGGSKGIGEAVVEELATLGARIH) is an NADP(+) binding site. Serine 155 provides a ligand contact to substrate. Tyrosine 168 (proton acceptor) is an active-site residue.

Belongs to the short-chain dehydrogenases/reductases (SDR) family. SDR65C subfamily.

Oxidoreductase active on cyclic ketones, but not on tropinone or nortropinone. This chain is Tropinone reductase homolog At2g29360, found in Arabidopsis thaliana (Mouse-ear cress).